We begin with the raw amino-acid sequence, 541 residues long: Chaperonin GroEL 2 (541 aa).

ATP contacts are provided by residues 29 to 32 (TLGP), 86 to 90 (DGTTT), G414, 478 to 480 (DAA), and D494.

The protein belongs to the chaperonin (HSP60) family. As to quaternary structure, forms a cylinder of 14 subunits composed of two heptameric rings stacked back-to-back. Interacts with the co-chaperonin GroES.

It localises to the cytoplasm. It carries out the reaction ATP + H2O + a folded polypeptide = ADP + phosphate + an unfolded polypeptide.. In terms of biological role, together with its co-chaperonin GroES, plays an essential role in assisting protein folding. The GroEL-GroES system forms a nano-cage that allows encapsulation of the non-native substrate proteins and provides a physical environment optimized to promote and accelerate protein folding. The polypeptide is Chaperonin GroEL 2 (Frankia casuarinae (strain DSM 45818 / CECT 9043 / HFP020203 / CcI3)).